We begin with the raw amino-acid sequence, 1330 residues long: Ubinuclein-2 (1330 aa).

The disordered stretch occupies residues 1–113 (MAEPRRVAFI…PPPRPPKETV (113 aa)). Phosphoserine is present on S13. Basic and acidic residues-rich tracts occupy residues 16 to 31 (RRRE…EPPR) and 55 to 67 (ARDK…EVSR). Residues 81–96 (PEPPPPPLPLQTPPPR) show a composition bias toward pro residues. T229 is modified (phosphothreonine). S236 carries the post-translational modification Phosphoserine. Disordered stretches follow at residues 236-304 (SDTE…KKRY) and 322-345 (DALK…PKPP). Position 238 is a phosphothreonine (T238). Residue K258 forms a Glycyl lysine isopeptide (Lys-Gly) (interchain with G-Cter in SUMO2) linkage. S297 is modified (phosphoserine). Residues S402, S405, S408, and S570 each carry the phosphoserine modification. Disordered stretches follow at residues 559-583 (LQAD…KRVI), 767-789 (NKGP…GLRE), 801-835 (LATP…DLAH), 866-909 (GLQR…SLTQ), 964-991 (YRLP…APST), 1021-1202 (PKLA…SSVV), and 1292-1330 (PGTQ…RKPQ). The span at 560–570 (QADEEREKNGS) shows a compositional bias: basic and acidic residues. Polar residues-rich tracts occupy residues 767–780 (NKGP…NVPT) and 809–818 (SPQTAHSSSL). A compositionally biased stretch (low complexity) spans 866–895 (GLQRSSQIHASSSQTHVSSSQAQAAASSHA). Polar residues-rich tracts occupy residues 899–909 (SEAQDASSLTQ) and 969–980 (STPSPGNGSQGS). Over residues 1030–1044 (ATSPKPLTSPKPSVS) the composition is skewed to pro residues. A compositionally biased stretch (low complexity) spans 1045 to 1056 (PKPSLSAKPSVS). K1052 carries the post-translational modification N6-acetyllysine. 3 stretches are compositionally biased toward polar residues: residues 1073–1148 (PSSS…NSLS), 1158–1169 (RGSNLNSSGANR), and 1308–1317 (HLQQAFNDGG). S1107 carries the post-translational modification Phosphoserine. K1132 is modified (N6-acetyllysine). A compositionally biased stretch (basic and acidic residues) spans 1321–1330 (GDTKLPRKPQ).

This sequence belongs to the ubinuclein family.

The sequence is that of Ubinuclein-2 (Ubn2) from Rattus norvegicus (Rat).